Consider the following 74-residue polypeptide: Conotoxin Vt11.7 (74 aa).

Residues 1 to 26 (MMFRLTSVGCFLLVIVLLNVAVLTNA) form the signal peptide. 4 disulfides stabilise this stretch: Cys-28-Cys-42, Cys-35-Cys-47, Cys-41-Cys-51, and Cys-46-Cys-55. Positions 62 to 74 (AHGHGLLRFWGQR) are excised as a propeptide.

It belongs to the conotoxin I2 superfamily. Expressed by the venom duct.

The protein resides in the secreted. The chain is Conotoxin Vt11.7 from Conus planorbis (Planorbis cone).